We begin with the raw amino-acid sequence, 236 residues long: UPF0257 lipoprotein YnfC (236 aa).

The signal sequence occupies residues 1-16; it reads MKYKLLPCLLAILLTG. Residue C17 is the site of N-palmitoyl cysteine attachment. C17 is lipidated: S-diacylglycerol cysteine.

Belongs to the UPF0257 family.

The protein localises to the cell membrane. This Escherichia coli O45:K1 (strain S88 / ExPEC) protein is UPF0257 lipoprotein YnfC.